We begin with the raw amino-acid sequence, 506 residues long: Notoamide biosynthesis cluster transcriptional coactivator notQ' (506 aa).

Positions 11 to 38 (CLVCRHRKVACDRGRPQCGLCRKNGFDC) form a DNA-binding region, zn(2)-C6 fungal-type. Residues 73–102 (GRLSQSQPSQPATERDDLATTPSTGRLAPP) are disordered. Polar residues predominate over residues 75–84 (LSQSQPSQPA).

Its subcellular location is the nucleus. Functionally, transcription factor that probably regulates the expression of the gene cluster that mediates the biosynthesis of notoamide, a fungal indole alkaloid that belongs to a family of natural products containing a characteristic bicyclo[2.2.2]diazaoctane core. The polypeptide is Notoamide biosynthesis cluster transcriptional coactivator notQ' (Aspergillus versicolor).